The following is a 356-amino-acid chain: MFLEKLKLLNSIFEEVESKLSDLSVISNQEEYRELTKQHFYLRPLAEKYIRYSKLLNEIKDAEELQKSKDAEMKEIAFAEYNNLIEKRNQMENEIKVLLIPTDPNEDKNIIVEIRAGTGGNEAALFVGDLYGMYTRFAERNGWKYEVLGSNPTGLGGYKEVVFEINGGKVWRCFKFERGAHRVQRVPETEASGRVHTSAATVAVLPEAEEVDVEIKMEDLRIDTYRASGAGGQHINKTDSAIRITHLPTGLVVACQDERSQIKNRAKAFKVLRAKIYEQRILEHEMRLSSERKQQIGSGDRSEKIRTYNFPQNRITDHRIGYSVYNITEVMDGNLSELVNKLIKADIESKLKENNI.

Gln-233 is subject to N5-methylglutamine.

This sequence belongs to the prokaryotic/mitochondrial release factor family. In terms of processing, methylated by PrmC. Methylation increases the termination efficiency of RF1.

The protein resides in the cytoplasm. In terms of biological role, peptide chain release factor 1 directs the termination of translation in response to the peptide chain termination codons UAG and UAA. This Endomicrobium trichonymphae protein is Peptide chain release factor 1.